The following is a 372-amino-acid chain: Aryl-hydrocarbon-interacting protein-like 1 (372 aa).

Residues 53–145 form the PPIase FKBP-type domain; the sequence is RQVDQPMHII…DLDELQKEPQ (93 aa). 3 TPR repeats span residues 178–211, 230–263, and 264–297; these read VPVL…LRNL, NTLT…HPGI, and VKAY…EPSM. The interval 315–372 is disordered; it reads KQEEERLRCRNMLSQGATQPPTEPPAEPHTAPPAELSTGPPAEPPAELPLSPGHSLQH. Residues 335–345 show a composition bias toward pro residues; that stretch reads PTEPPAEPHTA.

As to quaternary structure, interacts with NUB1.

It is found in the cytoplasm. The protein resides in the nucleus. Functionally, may be important in protein trafficking and/or protein folding and stabilization. The protein is Aryl-hydrocarbon-interacting protein-like 1 (AIPL1) of Papio cynocephalus (Yellow baboon).